A 125-amino-acid chain; its full sequence is Histone H2A (125 aa).

The span at M1–S18 shows a compositional bias: basic residues. A disordered region spans residues M1–L23. S2 carries the N-acetylserine modification. S2 carries the post-translational modification Phosphoserine. Q104 carries the post-translational modification N5-methylglutamine.

It belongs to the histone H2A family. The nucleosome is a histone octamer containing two molecules each of H2A, H2B, H3 and H4 assembled in one H3-H4 heterotetramer and two H2A-H2B heterodimers. The octamer wraps approximately 147 bp of DNA.

Its subcellular location is the nucleus. The protein localises to the chromosome. Its function is as follows. Core component of nucleosome. Nucleosomes wrap and compact DNA into chromatin, limiting DNA accessibility to the cellular machineries which require DNA as a template. Histones thereby play a central role in transcription regulation, DNA repair, DNA replication and chromosomal stability. DNA accessibility is regulated via a complex set of post-translational modifications of histones, also called histone code, and nucleosome remodeling. This Urechis caupo (Innkeeper worm) protein is Histone H2A.